We begin with the raw amino-acid sequence, 429 residues long: MKVSIFKTLYFQVLTAITIGVLLGHFYPEIGAQMKPLGDGFVKLIKMIIAPVIFCTVVTGIAGMESMKAVGRTGAIALLYFEIVSTLALLIGLVVVNVAQPGVGMNIDPATLDAKAVALYAEQASQQGIIPFLLDIIPGSVVGAFASGNILQVLLFAVLFGFALHRLGEKGQLIFNVIESFSRVIFGVINMIMRLAPLGAFGAMAFTIGKYGVGSLVQLGQLILCFYLTCILFVVLVLGTIAKFNGFNIFKFIRYIKEELLIVLGTSSSESVLPRMLDKMENAGCKKSVVGLVIPTGYSFNLDGTSIYLTMAAVFIAQATNTHMDIMHQVTLLVVLLLSSKGAAGVTGSGFIVLAATISAVGHLPLAGLALILGIDRFMSEARALTNLVGNGVATIVVAKWCKQLDNDQLQAVLSNKVLPNVKNSVSVS.

8 consecutive transmembrane segments (helical) span residues 3–23 (VSIF…GVLL), 44–64 (LIKM…IAGM), 76–96 (IALL…LVVV), 144–164 (AFAS…GFAL), 184–204 (VIFG…FGAM), 222–242 (LILC…GTIA), 331–351 (TLLV…GSGF), and 352–372 (IVLA…LALI).

This sequence belongs to the dicarboxylate/amino acid:cation symporter (DAACS) (TC 2.A.23) family.

Its subcellular location is the cell inner membrane. Functionally, responsible for the transport of dicarboxylates such as succinate, fumarate, and malate from the periplasm across the membrane. This is C4-dicarboxylate transport protein from Yersinia pseudotuberculosis serotype O:1b (strain IP 31758).